The primary structure comprises 273 residues: Chondrolectin (273 aa).

The first 21 residues, 1–21, serve as a signal peptide directing secretion; that stretch reads MIRIASLLLGAALLCAQGAFA. At 22 to 216 the chain is on the extracellular side; the sequence is RRVVSGQKVC…VVTEAGIIPN (195 aa). The C-type lectin domain maps to 35-179; sequence VKHPCYKMAY…CNMKHNYICK (145 aa). 2 disulfide bridges follow: Cys61/Cys178 and Cys144/Cys170. A glycan (N-linked (GlcNAc...) asparagine) is linked at Asn86. A helical transmembrane segment spans residues 217 to 237; it reads LIYVIIPTIPLLLLILVALGT. The Cytoplasmic segment spans residues 238–273; sequence CCFQMLHKSKGRSKTSPNQSTLWISKSTRKESGMEV. Positions 247-273 are disordered; the sequence is KGRSKTSPNQSTLWISKSTRKESGMEV. Over residues 251-263 the composition is skewed to polar residues; sequence KTSPNQSTLWISK.

In terms of assembly, interacts with RABGGTB. As to expression, in adult mice preferentially expressed in skeletal muscle, testis, brain, and lung. Expressed in striated muscle (at protein level). Expressed in spinal cord. Detected in spinal cord fast motor neurons (at protein level).

Its subcellular location is the membrane. May play a role in the development of the nervous system such as in neurite outgrowth and elongation. May be involved in motor axon growth and guidance. In Mus musculus (Mouse), this protein is Chondrolectin (Chodl).